The chain runs to 355 residues: Nuclear speckle splicing regulatory protein 1 homolog (355 aa).

Residues 1–57 (MSGTGFRYGLNVMKKKKPNESSNRITFTEDDSSSSEQEHAPIPNSFSSQITAASDAS) form a disordered region. Over residues 44–54 (NSFSSQITAAS) the composition is skewed to polar residues. A coiled-coil region spans residues 99 to 162 (MENLIESAKK…EDRKEEDEKS (64 aa)). Disordered regions lie at residues 253–292 (SANNSMRDDKKRNHKSSYKRSLSPSTRYHQDRPDKRHGTY) and 325–355 (KIHASRNTTETQVQSARERYLQRKKKAATNP). Basic and acidic residues predominate over residues 280-289 (YHQDRPDKRH). A coiled-coil region spans residues 293 to 326 (SLEEIDKQRKEFENRQRLQKEKEFQKSREAALKI). Residues 329 to 339 (SRNTTETQVQS) show a composition bias toward polar residues. Over residues 346 to 355 (QRKKKAATNP) the composition is skewed to basic residues.

It belongs to the NSRP1 family.

The sequence is that of Nuclear speckle splicing regulatory protein 1 homolog from Schizosaccharomyces pombe (strain 972 / ATCC 24843) (Fission yeast).